Reading from the N-terminus, the 121-residue chain is Parathyroid hormone 4 (121 aa).

Residues 1–24 (MLKMQRSQQRVALMMLMVVAAVHC) form the signal peptide. The propeptide occupies 25–29 (QESES). Residues 77–97 (RSRGAQLYSQPGREESSGGQK) are disordered.

This sequence belongs to the parathyroid hormone family. As to expression, specifically expressed in a bilateral cluster of neurons in the dorsal region of the periventricular hypothalamus. Their axons project through the midbrain and hindbrain and down the spinal cord.

The protein localises to the secreted. Functionally, neuroendocrine peptide which is produced by a subset of neurons in the hypothalamus. Activates the G-protein coupled receptors pth1ra, pth1rb and pth2r with similar affinity. Receptor binding stimulates intracellular cAMP production. Plays a role in bone mineralization by regulating expression of factors involved in phosphate homeostasis. Important for embryonic bone development. The chain is Parathyroid hormone 4 from Danio rerio (Zebrafish).